The primary structure comprises 315 residues: MSQLDALREMTVVVADTGDIEAIKQYQPQDATTNPSLILSASALPQYASLIDDAVAYAKARSDDKAQLLIDAEDKLAVNIGLEILKIVPGRISTEVDARLSYDTKATIEKARQIMKLYNDAGISNDRILIKIASTWQGIRAAEVLEKEGINCNLTLLFSQAQARACAKAGVYLISPFVGRILDWYKAAEKKEYAPAEDPGVISVTNIYNYYKQYGYQTVVMGASFRNVGEITEIAGCDRLTIAPPLLKELAESNAPLVRKLEYKGEVKTRPAPLTEAEFYWQHNQDPMAVEKLAEGIRKFAVDIEKLEAMLAAKL.

The active-site Schiff-base intermediate with substrate is the lysine 131.

The protein belongs to the transaldolase family. Type 1 subfamily. Homodimer.

It is found in the cytoplasm. The catalysed reaction is D-sedoheptulose 7-phosphate + D-glyceraldehyde 3-phosphate = D-erythrose 4-phosphate + beta-D-fructose 6-phosphate. It participates in carbohydrate degradation; pentose phosphate pathway; D-glyceraldehyde 3-phosphate and beta-D-fructose 6-phosphate from D-ribose 5-phosphate and D-xylulose 5-phosphate (non-oxidative stage): step 2/3. In terms of biological role, transaldolase is important for the balance of metabolites in the pentose-phosphate pathway. The polypeptide is Transaldolase (Actinobacillus pleuropneumoniae serotype 5b (strain L20)).